Reading from the N-terminus, the 555-residue chain is MAPLRLFWIWLLVVGTRGVKDGDMRLADGGSANQGRVEIYYNGQWGTVCENMWDLTDASVVCRALGFQNATEALGGAAFGPGYGPIMLDEVRCTGTEPSLANCSSLGWMRSNCRHDKDASVICTNETRGVYTLDLSGELPAALEQIFESQKGCDLFITVKVREEDEIAMCAHKLILSTNPEAHGLWKEPGSRVTMEVDAECVPVVKDFIRYLYSRRIDVSLSSVKCLHKLASAYQAKQLQSYCGHLFAILIPQDPSFWTPLELYAYALATRDPVLEEICVQFLAWNFGALTQAEAWPSVPPALLQGLLSRTELVVPSELVLLLAVDKWSQERRTSHKEVEALVGQVRFPMMPPQDLFSLQFNLSLYWSHEALFQKKILQALEFHTVPFELLAQYWGLNLTEGTYQPRLYTSPTWSQSVMSSSYNPSRSFQTPQHPSFLFHDSSVSWSFVYLPTLQSCWNYGFSCSSDDPPLLALSKSSYSKSNPTIGYENRALLHCEGSFVVDVIDFKGWKALVPSALATNSSRSTSLFPCPSGVFSRFQVVIRPFYLTNSTDMD.

The N-terminal stretch at 1–18 is a signal peptide; that stretch reads MAPLRLFWIWLLVVGTRG. Residues 24 to 124 form the SRCR domain; it reads MRLADGGSAN…HDKDASVICT (101 aa). 3 cysteine pairs are disulfide-bonded: Cys49/Cys113, Cys62/Cys123, and Cys93/Cys103. Residue Asn69 is glycosylated (N-linked (GlcNAc...) asparagine). Asn125 carries an N-linked (GlcNAc...) asparagine glycan. Residues 153-221 form the BTB domain; it reads CDLFITVKVR…LYSRRIDVSL (69 aa). The 101-residue stretch at 260 to 360 folds into the BACK domain; it reads PLELYAYALA…MPPQDLFSLQ (101 aa). Residues Asn362, Asn398, and Asn550 are each glycosylated (N-linked (GlcNAc...) asparagine).

Homodimers and homomultimers. The multimers form ring-like structures with a diameter of 30-40 nm. Binds LGALS1 and LGALS3. Binds ITGB1, COL4A1, COL5A1, COL6A1, FN1 and NID. Interacts with the gamma-tubulin ring complex (gamma-TuRC), composed of gamma-tubulin, TUBGCP2, TUBGCP3, TUBGCP4, TUBGCP5 and TUBGCP6. The unglycosylated form interacts with PDE4DIP; this interaction, which is PDE4DIP isoform-specific, may connect a pericentrosomal complex, made of AKAP9, CDK5RAP2, EB1/MAPRE1 and PDE4DIP, to the gamma-tubulin ring complex (gamma-TuRC) to promote microtubule assembly and acetylation.

The protein localises to the secreted. The protein resides in the extracellular space. It localises to the extracellular matrix. Functionally, promotes integrin-mediated cell adhesion. May stimulate host defense against viruses and tumor cells. In Bos taurus (Bovine), this protein is Galectin-3-binding protein (LGALS3BP).